A 324-amino-acid chain; its full sequence is NADH-ubiquinone oxidoreductase chain 1 (324 aa).

Helical transmembrane passes span 3–23, 77–97, 104–124, 150–170, 174–194, 226–246, 250–270, and 297–317; these read FILS…SVAF, ISPI…PFFV, LGGL…MVAG, LALI…IYFF, IYMW…TISL, LIFM…CVIF, DVFN…FIWA, and YLLF…WIFF.

Belongs to the complex I subunit 1 family.

It is found in the mitochondrion inner membrane. It catalyses the reaction a ubiquinone + NADH + 5 H(+)(in) = a ubiquinol + NAD(+) + 4 H(+)(out). Its function is as follows. Core subunit of the mitochondrial membrane respiratory chain NADH dehydrogenase (Complex I) that is believed to belong to the minimal assembly required for catalysis. Complex I functions in the transfer of electrons from NADH to the respiratory chain. The immediate electron acceptor for the enzyme is believed to be ubiquinone. The protein is NADH-ubiquinone oxidoreductase chain 1 (mt:ND1) of Drosophila yakuba (Fruit fly).